The sequence spans 145 residues: Putative antiporter subunit mnhG2 (145 aa).

Helical transmembrane passes span 11–31 (IAAV…IGIV), 51–71 (VLLT…FFSV), and 72–92 (RLLL…HLVA).

This sequence belongs to the CPA3 antiporters (TC 2.A.63) subunit G family. May form a heterooligomeric complex that consists of seven subunits: mnhA2, mnhB2, mnhC2, mnhD2, mnhE2, mnhF2 and mnhG2.

It is found in the cell membrane. This is Putative antiporter subunit mnhG2 (mnhG2) from Staphylococcus aureus (strain JH9).